The sequence spans 1265 residues: Protein diaphanous homolog 1 (1265 aa).

Position 1 is an N-acetylmethionine (Met-1). A compositionally biased stretch (gly residues) spans 1 to 12 (MEPSGGGLGPGR). 2 disordered regions span residues 1–42 (MEPS…FTLK) and 54–83 (SMRIKKEKEKPNSAHRNSSASYGDDPTAQS). The residue at position 22 (Ser-22) is a Phosphoserine. Over residues 54 to 65 (SMRIKKEKEKPN) the composition is skewed to basic and acidic residues. Over residues 67 to 83 (AHRNSSASYGDDPTAQS) the composition is skewed to polar residues. Residues 84-449 (LQDISDDQVL…QIVLHKNGTD (366 aa)) enclose the GBD/FH3 domain. Residues 474–568 (VEKSEAKATE…KKEMASLSAV (95 aa)) adopt a coiled-coil conformation. A disordered region spans residues 573-742 (SVSSSAAVPQ…PPPPGMGVPP (170 aa)). Pro residues-rich tracts occupy residues 594–628 (IPPPPPPPLPGGAVPPPPPPPLPAGTGIPPPPPLP) and 645–742 (IPPP…GVPP). Residues 625-757 (PPLPGGACIS…FGIPAAPVLP (133 aa)) enclose the FH1 domain. Thr-761 is subject to Phosphothreonine. The region spanning 762–1164 (PKKVYKPEVQ…MRRAKLAKEK (403 aa)) is the FH2 domain. Residues Lys-1050 and Lys-1096 each carry the N6-acetyllysine modification. A Phosphotyrosine modification is found at Tyr-1114. Residues 1141-1185 (AVKENQKRRETEEKMRRAKLAKEKAEKERLEKQQKREQLIDMNAE) are a coiled coil. The 29-residue stretch at 1187–1215 (DETGVMDSLLEALQSGAAFRRKRGPRQVN) folds into the DAD domain. The residue at position 1247 (Ser-1247) is a Phosphoserine.

This sequence belongs to the formin homology family. Diaphanous subfamily. Homodimer. Interacts with the GTP-bound form of RHOA. Interacts with RHOC, PFY1, MAPRE1, BAIAP2 and APC. Interacts with SCAI. Interacts with DCAF7, via FH2 domain. Interacts with NCDN. Interacts with OSBPL10, OSBPL2, VIM, TUBB and DYN1. Phosphorylation at Thr-761 is stimulated by cAMP and regulates stability, complex formation and mitochondrial movement. As to expression, expressed in testis. Present in Sertoli cells (at protein level).

The protein resides in the cell membrane. It is found in the cell projection. It localises to the ruffle membrane. Its subcellular location is the cytoplasm. The protein localises to the cytoskeleton. The protein resides in the microtubule organizing center. It is found in the centrosome. It localises to the spindle. Its subcellular location is the nucleus. Functionally, actin nucleation and elongation factor required for the assembly of F-actin structures, such as actin cables and stress fibers. Binds to the barbed end of the actin filament and slows down actin polymerization and depolymerization. Required for cytokinesis, and transcriptional activation of the serum response factor. DFR proteins couple Rho and Src tyrosine kinase during signaling and the regulation of actin dynamics. Functions as a scaffold protein for MAPRE1 and APC to stabilize microtubules and promote cell migration. Has neurite outgrowth promoting activity. Acts in a Rho-dependent manner to recruit PFY1 to the membrane. The MEMO1-RHOA-DIAPH1 signaling pathway plays an important role in ERBB2-dependent stabilization of microtubules at the cell cortex. It controls the localization of APC and CLASP2 to the cell membrane, via the regulation of GSK3B activity. In turn, membrane-bound APC allows the localization of the MACF1 to the cell membrane, which is required for microtubule capture and stabilization. Plays a role in the regulation of cell morphology and cytoskeletal organization. Required in the control of cell shape. Also acts as an actin nucleation and elongation factor in the nucleus by promoting nuclear actin polymerization inside the nucleus to drive serum-dependent SRF-MRTFA activity. The chain is Protein diaphanous homolog 1 from Rattus norvegicus (Rat).